Reading from the N-terminus, the 297-residue chain is Ribosomal RNA small subunit methyltransferase A (297 aa).

S-adenosyl-L-methionine contacts are provided by Asn-31, Leu-33, Gly-58, Glu-79, Asp-104, and Asn-129.

It belongs to the class I-like SAM-binding methyltransferase superfamily. rRNA adenine N(6)-methyltransferase family. RsmA subfamily.

It localises to the cytoplasm. The enzyme catalyses adenosine(1518)/adenosine(1519) in 16S rRNA + 4 S-adenosyl-L-methionine = N(6)-dimethyladenosine(1518)/N(6)-dimethyladenosine(1519) in 16S rRNA + 4 S-adenosyl-L-homocysteine + 4 H(+). Its function is as follows. Specifically dimethylates two adjacent adenosines (A1518 and A1519) in the loop of a conserved hairpin near the 3'-end of 16S rRNA in the 30S particle. May play a critical role in biogenesis of 30S subunits. The protein is Ribosomal RNA small subunit methyltransferase A of Staphylococcus aureus (strain Mu3 / ATCC 700698).